We begin with the raw amino-acid sequence, 301 residues long: METDGRLKAYKFVAYAAVGFSIAAVASVLLTLPMVYSYVSHVRQQMHHEINFCKGSAKDIFAEVNYMKANAGPVPPRNRTTRQAYGGPEVNPAPNLQCEGCCLPGPPGPAGAPGKPGKPGRPGAPGTPGTPGKPPVAPCEPTTPPPCKPCPQGPPGPPGPPGAPGDPGEAGTPGRPGTDAAPGSPGPRGPPGPAGEAGAPGPAGEPGTPAISEPLTPGAPGEPGDSGPPGPPGPPGAPGNDGPPGPPGPKGAPGPDGPPGVDGQSGPPGPPGPAGTPGEKGICPKYCALDGGVFFEDGTRR.

A signal peptide spans 1 to 37 (METDGRLKAYKFVAYAAVGFSIAAVASVLLTLPMVYS). The furin-like endopeptidase recognition region stretch occupies residues 79 to 82 (RTTR). Triple-helical region stretches follow at residues 105–134 (GPPGPAGAPGKPGKPGRPGAPGTPGTPGKP), 153–179 (GPPGPPGPPGAPGDPGEAGTPGRPGTD), 183–209 (GSPGPRGPPGPAGEAGAPGPAGEPGTP), and 218–283 (GAPG…KGIC). Residues 109-284 (PAGAPGKPGK…GTPGEKGICP (176 aa)) are disordered. Pro residues-rich tracts occupy residues 131–164 (PGKPPVAPCEPTTPPPCKPCPQGPPGPPGPPGAP) and 184–193 (SPGPRGPPGP). A compositionally biased stretch (low complexity) spans 194 to 210 (AGEAGAPGPAGEPGTPA). Residues 226–258 (SGPPGPPGPPGAPGNDGPPGPPGPKGAPGPDGP) are compositionally biased toward pro residues.

It belongs to the cuticular collagen family. Collagen polypeptide chains are complexed within the cuticle by disulfide bonds and other types of covalent cross-links.

It is found in the secreted. The protein localises to the extracellular space. Functionally, secreted collagen that forms part of the nematode cuticle, which functions as an exoskeleton and a barrier to protect the worm from its environment. Secretion and subsequent incorporation into the cuticle is likely mediated by bli-4, which probably cleaves at the N-terminal consensus furin cleavage site. This chain is Cuticle collagen 1 (sqt-3), found in Caenorhabditis elegans.